Reading from the N-terminus, the 499-residue chain is Alpha-amylase B (499 aa).

Residues 1–21 (MMVAWWSLFLYGLQVAAPALA) form the signal peptide. A disulfide bridge connects residues cysteine 51 and cysteine 59. Residues glutamine 56 and tryptophan 104 each contribute to the substrate site. Asparagine 142 is a Ca(2+) binding site. Histidine 143 serves as a coordination point for substrate. An intrachain disulfide couples cysteine 171 to cysteine 185. Residues glutamate 183 and aspartate 196 each coordinate Ca(2+). Asparagine 218 is a glycosylation site (N-linked (GlcNAc...) asparagine). Arginine 225 contacts substrate. Ca(2+)-binding residues include aspartate 227, histidine 231, and glutamate 251. Residue aspartate 227 is the Nucleophile of the active site. 230–231 (KH) provides a ligand contact to substrate. Catalysis depends on glutamate 251, which acts as the Proton donor. Residue glycine 255 participates in substrate binding. Cysteine 261 and cysteine 304 are joined by a disulfide. 2 residues coordinate substrate: aspartate 318 and arginine 365. A disulfide bridge links cysteine 461 with cysteine 496.

Belongs to the glycosyl hydrolase 13 family. The cofactor is Ca(2+).

It catalyses the reaction Endohydrolysis of (1-&gt;4)-alpha-D-glucosidic linkages in polysaccharides containing three or more (1-&gt;4)-alpha-linked D-glucose units.. The protein is Alpha-amylase B (amyB) of Aspergillus awamori (Black koji mold).